A 329-amino-acid chain; its full sequence is METLFSGIQPSGIPTIGNYIGALKQFVDVQDDYECFFCIVDQHAITVPQDRLKLRKQIRQLAAIYLASGIDPDKSTLFIQSEVPAHVQAGWMLTTIASIGELERMTQFKDKAQKRADGVPAGLLTYPPLMAADIVIYNTNIVPVGDDQKQHMELTRNLVDRFNSRYNDVLVKPEVRMPKVGGRVMSLQDPTKKMSKSDDNQKNFISLLDEPHVAAKKIKSAVTDSDGIIKFDRENKPGISNLLSIYSGLTNDSIKNIESKYEGEGYGKFKGDLSEIVKDFLINFQEKYASFYNSDDLDDILDKGKEKAQKASFKTLKKMEKAMGLGRKR.

ATP-binding positions include 9–11 and 17–18; these read QPS and GN. The 'HIGH' region signature appears at 10–18; the sequence is PSGIPTIGN. Residue Asp133 coordinates L-tryptophan. ATP-binding positions include 145–147, Val184, and 193–197; these read GDD and KMSKS. The 'KMSKS' region signature appears at 193–197; it reads KMSKS.

The protein belongs to the class-I aminoacyl-tRNA synthetase family. In terms of assembly, homodimer.

It localises to the cytoplasm. The enzyme catalyses tRNA(Trp) + L-tryptophan + ATP = L-tryptophyl-tRNA(Trp) + AMP + diphosphate + H(+). In terms of biological role, catalyzes the attachment of tryptophan to tRNA(Trp). The protein is Tryptophan--tRNA ligase of Staphylococcus epidermidis (strain ATCC 35984 / DSM 28319 / BCRC 17069 / CCUG 31568 / BM 3577 / RP62A).